The chain runs to 220 residues: Phosphatidylinositol phosphate synthase (220 aa).

2 helical membrane-spanning segments follow: residues 21–46 (LLRAGFTPDTVTIFGTAASVVAALTL) and 52–72 (LFWGGMAVWLFAMFDMLDGAM). 29–32 (DTVT) lines the a CDP-1,2-diacyl-sn-glycerol pocket. Residues Asp-66 and Asp-69 each coordinate Mg(2+). 3 residues coordinate a CDP-1,2-diacyl-sn-glycerol: Gly-70, Arg-74, and Thr-80. Mg(2+) is bound by residues Asp-87 and Asp-91. Catalysis depends on Asp-91, which acts as the Proton acceptor. The next 4 membrane-spanning stretches (helical) occupy residues 93–110 (VADGAVFAGLVWWAAFGW), 116–134 (VVATLICMITSQVISYVKA), 154–171 (LIIVLAGAIFSGGFGVQW), and 177–194 (MWVLAVASLVTVAQRMHA).

The protein belongs to the CDP-alcohol phosphatidyltransferase class-I family. Homodimer. Mg(2+) is required as a cofactor.

Its subcellular location is the cell membrane. The enzyme catalyses a CDP-1,2-diacyl-sn-glycerol + 1D-myo-inositol 3-phosphate = a 1,2-diacyl-sn-glycero-3-phospho-(1D-myo-inositol-3-phosphate) + CMP + H(+). The catalysed reaction is 1,2-di-(9Z-octadecenoyl)-sn-glycero-3-cytidine-5'-diphosphate + 1D-myo-inositol 3-phosphate = 1,2-di-(9Z-octadecenoyl)-sn-glycero-3-phospho-(1D-myo-inositol-3-phosphate) + CMP + H(+). Its pathway is phospholipid metabolism; phosphatidylinositol phosphate biosynthesis. In terms of biological role, catalyzes the conjugation of the 1'-hydroxyl group of D-myo-inositol-3-phosphate (also named L-myo-inositol-1-phosphate) with a lipid tail of cytidine diphosphate diacylglycerol (CDP-DAG), forming phosphatidylinositol phosphate (PIP) and CMP. PIP is a precursor of phosphatidylinositol (PI) which is an essential lipid for mycobacteria required for formation of their cell wall. The protein is Phosphatidylinositol phosphate synthase of Mycobacteroides abscessus (strain ATCC 19977 / DSM 44196 / CCUG 20993 / CIP 104536 / JCM 13569 / NCTC 13031 / TMC 1543 / L948) (Mycobacterium abscessus).